Consider the following 341-residue polypeptide: Ribosomal RNA small subunit methyltransferase C (341 aa).

This sequence belongs to the methyltransferase superfamily. RsmC family. In terms of assembly, monomer.

The protein resides in the cytoplasm. It catalyses the reaction guanosine(1207) in 16S rRNA + S-adenosyl-L-methionine = N(2)-methylguanosine(1207) in 16S rRNA + S-adenosyl-L-homocysteine + H(+). In terms of biological role, specifically methylates the guanine in position 1207 of 16S rRNA in the 30S particle. The protein is Ribosomal RNA small subunit methyltransferase C of Pseudoalteromonas translucida (strain TAC 125).